The primary structure comprises 130 residues: Large ribosomal subunit protein uL22 (130 aa).

This sequence belongs to the universal ribosomal protein uL22 family. In terms of assembly, part of the 50S ribosomal subunit.

Functionally, this protein binds specifically to 23S rRNA; its binding is stimulated by other ribosomal proteins, e.g. L4, L17, and L20. It is important during the early stages of 50S assembly. It makes multiple contacts with different domains of the 23S rRNA in the assembled 50S subunit and ribosome. Its function is as follows. The globular domain of the protein is located near the polypeptide exit tunnel on the outside of the subunit, while an extended beta-hairpin is found that lines the wall of the exit tunnel in the center of the 70S ribosome. This Clavibacter michiganensis subsp. michiganensis (strain NCPPB 382) protein is Large ribosomal subunit protein uL22.